A 514-amino-acid chain; its full sequence is Histidine ammonia-lyase (514 aa).

Positions 143–145 form a cross-link, 5-imidazolinone (Ala-Gly); it reads ASG. Ser144 is subject to 2,3-didehydroalanine (Ser).

This sequence belongs to the PAL/histidase family. In terms of processing, contains an active site 4-methylidene-imidazol-5-one (MIO), which is formed autocatalytically by cyclization and dehydration of residues Ala-Ser-Gly.

The protein resides in the cytoplasm. It catalyses the reaction L-histidine = trans-urocanate + NH4(+). The protein operates within amino-acid degradation; L-histidine degradation into L-glutamate; N-formimidoyl-L-glutamate from L-histidine: step 1/3. In Photorhabdus laumondii subsp. laumondii (strain DSM 15139 / CIP 105565 / TT01) (Photorhabdus luminescens subsp. laumondii), this protein is Histidine ammonia-lyase.